Here is a 364-residue protein sequence, read N- to C-terminus: Zinc finger protein 474 (364 aa).

Over residues 1-10 (MERGKKKRIS) the composition is skewed to basic residues. 2 disordered regions span residues 1–21 (MERGKKKRISNKLQQTFHHSK) and 37–60 (SYSSLSPETESVNPGENIKTDTQK). The segment at 93 to 122 (GFRVCYICGREFGSQSIAIHEPQCLQKWHI) adopts a C2HC/C3H-type 1 zinc-finger fold. Zn(2+)-binding residues include Cys-97, Cys-100, His-112, and Cys-116. Positions 127–147 (LPKHLRRPEPSKPQSLSSSGS) are disordered. Low complexity predominate over residues 138-147 (KPQSLSSSGS). 3 C2HC/C3H-type zinc fingers span residues 164-193 (QLLPCESCGRTFLPDHLLVHHRSCKPKGEG), 220-249 (RTVICYICGKEFGTLSLPIHEPKCLEKWKM), and 283-312 (QLVFCPHCSRIFTSDRLLVHQRSCKTHPYG). Residues Cys-168, Cys-171, His-183, Cys-187, Cys-224, Cys-227, His-239, Cys-243, Cys-287, Cys-290, His-302, and Cys-306 each contribute to the Zn(2+) site. The segment at 187–214 (CKPKGEGPRAPHSNSSDHLTGLKKACSG) is disordered.

Requires Zn(2+) as cofactor.

The polypeptide is Zinc finger protein 474 (ZNF474) (Homo sapiens (Human)).